A 508-amino-acid polypeptide reads, in one-letter code: Photosystem II CP47 reaction center protein (508 aa).

The next 6 helical transmembrane spans lie at 21–36 (SVHI…WAGS), 101–115 (IMLS…IWHW), 140–156 (GIHL…FGAF), 203–218 (IAAG…FHLS), 237–252 (VLSS…AFVV), and 457–472 (SFAL…HGAR).

Belongs to the PsbB/PsbC family. PsbB subfamily. As to quaternary structure, PSII is composed of 1 copy each of membrane proteins PsbA, PsbB, PsbC, PsbD, PsbE, PsbF, PsbH, PsbI, PsbJ, PsbK, PsbL, PsbM, PsbT, PsbX, PsbY, PsbZ, Psb30/Ycf12, at least 3 peripheral proteins of the oxygen-evolving complex and a large number of cofactors. It forms dimeric complexes. It depends on Binds multiple chlorophylls. PSII binds additional chlorophylls, carotenoids and specific lipids. as a cofactor.

Its subcellular location is the plastid. The protein localises to the chloroplast thylakoid membrane. One of the components of the core complex of photosystem II (PSII). It binds chlorophyll and helps catalyze the primary light-induced photochemical processes of PSII. PSII is a light-driven water:plastoquinone oxidoreductase, using light energy to abstract electrons from H(2)O, generating O(2) and a proton gradient subsequently used for ATP formation. This Piper cenocladum (Ant piper) protein is Photosystem II CP47 reaction center protein.